The following is a 350-amino-acid chain: DNA polymerase IV (350 aa).

The UmuC domain occupies 4-185 (IIHIDMDCFY…LPLGKLPGIG (182 aa)). Positions 8 and 103 each coordinate Mg(2+). Glu-104 is an active-site residue.

Belongs to the DNA polymerase type-Y family. In terms of assembly, monomer. Requires Mg(2+) as cofactor.

Its subcellular location is the cytoplasm. It carries out the reaction DNA(n) + a 2'-deoxyribonucleoside 5'-triphosphate = DNA(n+1) + diphosphate. In terms of biological role, poorly processive, error-prone DNA polymerase involved in untargeted mutagenesis. Copies undamaged DNA at stalled replication forks, which arise in vivo from mismatched or misaligned primer ends. These misaligned primers can be extended by PolIV. Exhibits no 3'-5' exonuclease (proofreading) activity. May be involved in translesional synthesis, in conjunction with the beta clamp from PolIII. The sequence is that of DNA polymerase IV from Aeromonas hydrophila subsp. hydrophila (strain ATCC 7966 / DSM 30187 / BCRC 13018 / CCUG 14551 / JCM 1027 / KCTC 2358 / NCIMB 9240 / NCTC 8049).